We begin with the raw amino-acid sequence, 139 residues long: Ribosome maturation factor RimP (139 aa).

The protein belongs to the RimP family.

The protein localises to the cytoplasm. Its function is as follows. Required for maturation of 30S ribosomal subunits. This is Ribosome maturation factor RimP from Syntrophomonas wolfei subsp. wolfei (strain DSM 2245B / Goettingen).